The chain runs to 302 residues: Sulfate adenylyltransferase subunit 2 (302 aa).

The disordered stretch occupies residues 280–302 (RQGRLIDSDQSASMEQKKRQGYF).

This sequence belongs to the PAPS reductase family. CysD subfamily. Heterodimer composed of CysD, the smaller subunit, and CysN.

It catalyses the reaction sulfate + ATP + H(+) = adenosine 5'-phosphosulfate + diphosphate. The protein operates within sulfur metabolism; hydrogen sulfide biosynthesis; sulfite from sulfate: step 1/3. In terms of biological role, with CysN forms the ATP sulfurylase (ATPS) that catalyzes the adenylation of sulfate producing adenosine 5'-phosphosulfate (APS) and diphosphate, the first enzymatic step in sulfur assimilation pathway. APS synthesis involves the formation of a high-energy phosphoric-sulfuric acid anhydride bond driven by GTP hydrolysis by CysN coupled to ATP hydrolysis by CysD. This Shewanella sp. (strain ANA-3) protein is Sulfate adenylyltransferase subunit 2.